We begin with the raw amino-acid sequence, 396 residues long: 1-deoxy-D-xylulose 5-phosphate reductoisomerase (396 aa).

Thr-13, Gly-14, Ser-15, Ile-16, and Asn-127 together coordinate NADPH. Residue Lys-128 participates in 1-deoxy-D-xylulose 5-phosphate binding. Glu-129 serves as a coordination point for NADPH. Asp-153 contributes to the Mn(2+) binding site. 4 residues coordinate 1-deoxy-D-xylulose 5-phosphate: Ser-154, Glu-155, Ser-184, and His-207. Residue Glu-155 coordinates Mn(2+). An NADPH-binding site is contributed by Gly-213. Ser-220, Asn-225, Lys-226, and Glu-229 together coordinate 1-deoxy-D-xylulose 5-phosphate. Glu-229 is a Mn(2+) binding site.

The protein belongs to the DXR family. The cofactor is Mg(2+). It depends on Mn(2+) as a cofactor.

The enzyme catalyses 2-C-methyl-D-erythritol 4-phosphate + NADP(+) = 1-deoxy-D-xylulose 5-phosphate + NADPH + H(+). It participates in isoprenoid biosynthesis; isopentenyl diphosphate biosynthesis via DXP pathway; isopentenyl diphosphate from 1-deoxy-D-xylulose 5-phosphate: step 1/6. With respect to regulation, inhibited by fosmidomycin and 3-(N-acetyl-N-hydroxyamino)-propylphosphonic acid (FR-900098). Catalyzes the NADPH-dependent rearrangement and reduction of 1-deoxy-D-xylulose-5-phosphate (DXP) to 2-C-methyl-D-erythritol 4-phosphate (MEP). This chain is 1-deoxy-D-xylulose 5-phosphate reductoisomerase, found in Pseudomonas aeruginosa (strain ATCC 15692 / DSM 22644 / CIP 104116 / JCM 14847 / LMG 12228 / 1C / PRS 101 / PAO1).